A 295-amino-acid polypeptide reads, in one-letter code: Elongation factor Ts (295 aa).

Positions 80–83 are involved in Mg(2+) ion dislocation from EF-Tu; that stretch reads TDFV.

It belongs to the EF-Ts family.

The protein localises to the cytoplasm. Associates with the EF-Tu.GDP complex and induces the exchange of GDP to GTP. It remains bound to the aminoacyl-tRNA.EF-Tu.GTP complex up to the GTP hydrolysis stage on the ribosome. The chain is Elongation factor Ts from Lysinibacillus sphaericus (strain C3-41).